A 159-amino-acid polypeptide reads, in one-letter code: Cyclic pyranopterin monophosphate synthase (159 aa).

Substrate contacts are provided by residues 75–77 (LCH) and 113–114 (ME). The active site involves Asp128.

It belongs to the MoaC family. As to quaternary structure, homohexamer; trimer of dimers.

The catalysed reaction is (8S)-3',8-cyclo-7,8-dihydroguanosine 5'-triphosphate = cyclic pyranopterin phosphate + diphosphate. The protein operates within cofactor biosynthesis; molybdopterin biosynthesis. In terms of biological role, catalyzes the conversion of (8S)-3',8-cyclo-7,8-dihydroguanosine 5'-triphosphate to cyclic pyranopterin monophosphate (cPMP). The sequence is that of Cyclic pyranopterin monophosphate synthase from Aliivibrio fischeri (strain MJ11) (Vibrio fischeri).